We begin with the raw amino-acid sequence, 188 residues long: MAIIGILGTPYNTVERSPFWWNKVSYTRQSFIDVFQELGHTVIVLPVDKTENIKNYLPLVDKIVLTGGVDVSPYLYGEEPHAQLGTTDPIRDRFELAAIKAALEANKPILGVCRGLQLLNVYFGGTLYQDLSLTSSQIKHLQSPTPQEVPTHHISVEKEDSFRFLPENYMVNSFHHQVIKDLGQGLQA.

The 172-residue stretch at 17–188 (SPFWWNKVSY…IKDLGQGLQA (172 aa)) folds into the Glutamine amidotransferase type-1 domain.

The polypeptide is Putative glutamine amidotransferase-like protein YvdE homolog (Lactococcus lactis subsp. cremoris (Streptococcus cremoris)).